We begin with the raw amino-acid sequence, 413 residues long: Queuine tRNA-ribosyltransferase accessory subunit 2 (413 aa).

The segment at 298 to 321 (LEKSETSGAERNGDVGAESEEPDA) is disordered. Zn(2+) is bound by residues cysteine 349, cysteine 351, cysteine 354, and histidine 380.

It belongs to the queuine tRNA-ribosyltransferase family. QTRT2 subfamily. As to quaternary structure, heterodimer of a catalytic subunit qtrt1 and an accessory subunit qtrt2. Zn(2+) is required as a cofactor.

It localises to the cytoplasm. The protein localises to the mitochondrion outer membrane. Non-catalytic subunit of the queuine tRNA-ribosyltransferase (TGT) that catalyzes the base-exchange of a guanine (G) residue with queuine (Q) at position 34 (anticodon wobble position) in tRNAs with GU(N) anticodons (tRNA-Asp, -Asn, -His and -Tyr), resulting in the hypermodified nucleoside queuosine (7-(((4,5-cis-dihydroxy-2-cyclopenten-1-yl)amino)methyl)-7-deazaguanosine). The protein is Queuine tRNA-ribosyltransferase accessory subunit 2 of Xenopus tropicalis (Western clawed frog).